We begin with the raw amino-acid sequence, 199 residues long: Calcium-binding protein CAST (199 aa).

The segment covering 1–13 has biased composition (basic and acidic residues); the sequence is MGSVQDENKDEFK. The disordered stretch occupies residues 1 to 31; that stretch reads MGSVQDENKDEFKQSLTRGKLKPSSSSSFRL. 4 consecutive EF-hand domains span residues 36–71, 75–110, 125–160, and 163–198; these read LNSIRLRRIFDVFDRNHDCLISVEELSQALNLLGLD, SEIESMVKLHIKPENTGLRFEDFETLHRSLNDVFFG, QDESDLKEAFDVFDENGDGFISAKELQVVLEKLGLP, and SEIDRVEMMISSVEQDHDGRVDFFEFKDMMRTVIVP. Ca(2+) contacts are provided by Asp-49, Asn-51, Asp-53, and Glu-60. Residues Asp-138, Asn-140, Asp-142, Glu-149, Asp-178, Asp-180, Arg-182, and Glu-187 each coordinate Ca(2+).

Its function is as follows. Not known. Probably binds 3 calcium ions. The chain is Calcium-binding protein CAST from Solanum tuberosum (Potato).